We begin with the raw amino-acid sequence, 126 residues long: Large ribosomal subunit protein bL20c (126 aa).

Belongs to the bacterial ribosomal protein bL20 family.

It localises to the plastid. The protein resides in the chloroplast. Binds directly to 23S ribosomal RNA and is necessary for the in vitro assembly process of the 50S ribosomal subunit. It is not involved in the protein synthesizing functions of that subunit. In Illicium oligandrum (Star anise), this protein is Large ribosomal subunit protein bL20c.